The chain runs to 522 residues: Tryptophan 2-halogenase (522 aa).

FAD-binding residues include alanine 17, glutamate 36, arginine 42, histidine 44, isoleucine 45, serine 48, arginine 103, isoleucine 127, and aspartate 296. Residues serine 307 and glycine 308 each coordinate chloride. Valine 309 provides a ligand contact to FAD.

Belongs to the flavin-dependent halogenase family.

Its function is as follows. Involved in the incorporation of a chlorinated tryptophan residue into halogenated forms of the secondary metabolites called chondramides. The polypeptide is Tryptophan 2-halogenase (Chondromyces crocatus).